We begin with the raw amino-acid sequence, 165 residues long: Ribosome maturation factor RimM (165 aa).

Residues 90–161 form the PRC barrel domain; the sequence is EDEYFIVDLV…LITIRPSGEW (72 aa).

It belongs to the RimM family. As to quaternary structure, binds ribosomal protein uS19.

The protein localises to the cytoplasm. Its function is as follows. An accessory protein needed during the final step in the assembly of 30S ribosomal subunit, possibly for assembly of the head region. Essential for efficient processing of 16S rRNA. May be needed both before and after RbfA during the maturation of 16S rRNA. It has affinity for free ribosomal 30S subunits but not for 70S ribosomes. The protein is Ribosome maturation factor RimM of Clostridium perfringens (strain ATCC 13124 / DSM 756 / JCM 1290 / NCIMB 6125 / NCTC 8237 / Type A).